The sequence spans 174 residues: Centrosomal protein 20 (174 aa).

The necessary and sufficient for homooligomerization and localization to centrosomes and pericentriolar satellites stretch occupies residues 1-104 (MATVTELKAV…AFEESKDNSI (104 aa)). The 33-residue stretch at 49 to 81 (ENLLINELIREYLEFNKYKYTASVLIAESGQPV) folds into the LisH domain. The tract at residues 136–174 (TKHLSWKPSRRPDDDHVRKDTGPRTTTEELPAAAQAVSR) is disordered. Residue serine 144 is modified to Phosphoserine. Over residues 145-157 (RRPDDDHVRKDTG) the composition is skewed to basic and acidic residues.

The protein belongs to the CEP43 family. As to quaternary structure, homooligomer; probably required for localization to centrosomes. Forms a complex with KIAA0753/OFIP and OFD1; within this complex may stabilize the interaction between OFD1 and KIAA0753/OFIP. Interacts with PCM1; this interaction may be mediated by KIAA0753/OFIP.

Its subcellular location is the cytoplasm. The protein resides in the cytoskeleton. It is found in the microtubule organizing center. It localises to the centrosome. The protein localises to the centriole. Its subcellular location is the cell projection. The protein resides in the cilium. It is found in the cilium basal body. It localises to the cytoplasmic granule. The protein localises to the centriolar satellite. Involved in the biogenesis of cilia. Required for the recruitment of PLK1 to centrosomes and S phase progression. The sequence is that of Centrosomal protein 20 from Mus musculus (Mouse).